We begin with the raw amino-acid sequence, 260 residues long: MAAEEASRSSPRFRREPKGRVSRQDKYSVLLPTYNERENLPFIVWLLVKSFSESGFNYEIIIIDDGSPDGTRDVAEQLEKIYGSDRILLRPREKKLGLGTAYIHGMKHATGNYIIIMDADLSHHPKFIPEFIRKQKEGNFDIVSGTRYKGNGGVYGWDLKRKIISRVANFITQILLRPGASDLTGSFRLYRKEVLQKLIGKCISKGYVFQMEMIVRARQLNYTIGEVPISFVDRVYGESKLGGNEIVSFLKGLLTLFATT.

The interval 1-20 (MAAEEASRSSPRFRREPKGR) is disordered. N-acetylalanine is present on Ala-2. Ser-9 carries the post-translational modification Phosphoserine. The GDP-alpha-D-mannose site is built by Pro-32, Tyr-34, Glu-36, Ile-63, Asp-65, Asp-118, Ala-119, Asp-120, Arg-147, Arg-234, and Lys-240. Asp-120 contributes to the Mg(2+) binding site. Residue Asp-120 coordinates Mn(2+).

The protein belongs to the glycosyltransferase 2 family. Component of the dolichol-phosphate mannose (DPM) synthase complex composed of DPM1, DPM2 and DPM3; within the complex, directly interacts with DPM3. This interaction may stabilize DPM1. Mg(2+) serves as cofactor. It depends on Mn(2+) as a cofactor. Requires Ca(2+) as cofactor.

It is found in the endoplasmic reticulum. It catalyses the reaction a di-trans,poly-cis-dolichyl phosphate + GDP-alpha-D-mannose = a di-trans,poly-cis-dolichyl beta-D-mannosyl phosphate + GDP. It functions in the pathway protein modification; protein glycosylation. Functionally, transfers mannose from GDP-mannose to dolichol monophosphate to form dolichol phosphate mannose (Dol-P-Man) which is the mannosyl donor in pathways leading to N-glycosylation, glycosyl phosphatidylinositol membrane anchoring, and O-mannosylation of proteins; catalytic subunit of the dolichol-phosphate mannose (DPM) synthase complex. This chain is Dolichol-phosphate mannosyltransferase subunit 1 (DPM1), found in Bos taurus (Bovine).